The sequence spans 259 residues: Type III pantothenate kinase (259 aa).

6-13 serves as a coordination point for ATP; it reads DVGNTNCT. 107–110 serves as a coordination point for substrate; it reads GSDR. The Proton acceptor role is filled by D109. Position 129 (D129) interacts with K(+). T132 contributes to the ATP binding site. T184 is a substrate binding site.

Belongs to the type III pantothenate kinase family. As to quaternary structure, homodimer. NH4(+) is required as a cofactor. Requires K(+) as cofactor.

Its subcellular location is the cytoplasm. The enzyme catalyses (R)-pantothenate + ATP = (R)-4'-phosphopantothenate + ADP + H(+). It functions in the pathway cofactor biosynthesis; coenzyme A biosynthesis; CoA from (R)-pantothenate: step 1/5. In terms of biological role, catalyzes the phosphorylation of pantothenate (Pan), the first step in CoA biosynthesis. This chain is Type III pantothenate kinase, found in Listeria welshimeri serovar 6b (strain ATCC 35897 / DSM 20650 / CCUG 15529 / CIP 8149 / NCTC 11857 / SLCC 5334 / V8).